The following is a 303-amino-acid chain: Pantothenate synthetase (303 aa).

An ATP-binding site is contributed by 30–37; that stretch reads MGYLHAGH. Histidine 37 functions as the Proton donor in the catalytic mechanism. A (R)-pantoate-binding site is contributed by glutamine 61. Glutamine 61 is a binding site for beta-alanine. 147 to 150 serves as a coordination point for ATP; the sequence is GAKD. Glutamine 153 is a (R)-pantoate binding site. Residues valine 176 and 184-187 each bind ATP; that span reads LSSR.

Belongs to the pantothenate synthetase family. In terms of assembly, homodimer.

Its subcellular location is the cytoplasm. It catalyses the reaction (R)-pantoate + beta-alanine + ATP = (R)-pantothenate + AMP + diphosphate + H(+). The protein operates within cofactor biosynthesis; (R)-pantothenate biosynthesis; (R)-pantothenate from (R)-pantoate and beta-alanine: step 1/1. Its function is as follows. Catalyzes the condensation of pantoate with beta-alanine in an ATP-dependent reaction via a pantoyl-adenylate intermediate. In Rhizobium johnstonii (strain DSM 114642 / LMG 32736 / 3841) (Rhizobium leguminosarum bv. viciae), this protein is Pantothenate synthetase.